The chain runs to 262 residues: Caffeyl-CoA reductase-Etf complex subunit CarD (262 aa).

This sequence belongs to the ETF beta-subunit/FixA family. Part of the homotrimeric caffeyl-CoA reductase-Etf complex composed of (R)-2-hydroxyisocaproyl-CoA dehydratase CarC, and the electron transfer flavoprotein (ETF) alpha (CarE) and beta (CarD) subunits. The cofactor is FAD. Requires AMP as cofactor.

It is found in the cytoplasm. The enzyme catalyses hydrocaffeoyl-CoA + 2 reduced [2Fe-2S]-[ferredoxin] + 2 NAD(+) = (E)-caffeoyl-CoA + 2 oxidized [2Fe-2S]-[ferredoxin] + 2 NADH. Functionally, caffeyl-CoA reductase-Etf complex catalyzes the reduction of caffeyl-CoA to yield hydrocaffeyl-CoA. It couples the endergonic ferredoxin reduction with NADH as reductant to the exergonic reduction of caffeoyl-CoA with the same reductant. It uses the mechanism of electron bifurcation to overcome the steep energy barrier in ferredoxin reduction. The electron transfer flavoprotein (Etf) mediates the electron transfer between the different donors and acceptors. The complex can also reduce 4-coumaroyl-CoA and feruloyl-CoA. The chain is Caffeyl-CoA reductase-Etf complex subunit CarD from Acetobacterium woodii (strain ATCC 29683 / DSM 1030 / JCM 2381 / KCTC 1655 / WB1).